Reading from the N-terminus, the 75-residue chain is Defensin J1-1 (75 aa).

Positions 1–27 (MAGFSKVVATIFLMMLLVFATDMMAEA) are cleaved as a signal peptide. Intrachain disulfides connect Cys30–Cys74, Cys41–Cys61, Cys47–Cys68, and Cys51–Cys70.

This sequence belongs to the DEFL family. As to quaternary structure, monomer. As to expression, expressed in orange and red ripe fruit and to a lesser extent in mature, green fruit. Present in trace in young, green fruit.

The protein resides in the secreted. Plant defense peptide with antifungal activity against F.oxysporum and B.cinerea. This is Defensin J1-1 from Capsicum annuum (Capsicum pepper).